The following is a 152-amino-acid chain: Ribosomal RNA large subunit methyltransferase H (152 aa).

Residues L70, G102, and 120-125 each bind S-adenosyl-L-methionine; that span reads LSPMTF.

It belongs to the RNA methyltransferase RlmH family. Homodimer.

The protein localises to the cytoplasm. The enzyme catalyses pseudouridine(1915) in 23S rRNA + S-adenosyl-L-methionine = N(3)-methylpseudouridine(1915) in 23S rRNA + S-adenosyl-L-homocysteine + H(+). Functionally, specifically methylates the pseudouridine at position 1915 (m3Psi1915) in 23S rRNA. In Pelobacter propionicus (strain DSM 2379 / NBRC 103807 / OttBd1), this protein is Ribosomal RNA large subunit methyltransferase H.